Consider the following 1669-residue polypeptide: MALLRRLFYRKPPDRLLEIADRVYVFDCCFSTETMEQFEYKNYLDNIVLQLREQFVDSSLMVFNFRDEGKSLVSGLFSLYGITVKDYPCQYLGCPLLPLEMVLHFLRLSERWLMLEGQQNFLLMHCEKGGWPVLAFMLAGLLLYMKQYNGEERTLVMVYKQAPKELLQMLTTLNPQPSHLRYLQYICKMDDELEWPIQPIPFTLDCVILREVPNFDGVGGCRPIVRVYGQDFLTVDKRCNVMLPPSKPRKHARRYKQQADNISVKLNVGSCVQGDVVLECLHIDDSLEDERLMFRVMFNTYFIQSHILPLNFENIDVSWDAEQRFTKKFKAEVLFSEFDGESDASIEVASDYDDEVEVGSIDVFFEAVEIFSNLDSQEGQRDAEILSITSTECSPRAELMKTAPFSHFDMEIGLGGSQKNKIDGMVLSLEKSDEKCTSAEGDIIQNNITRVVRSSSANTTDGDRDTMNSSCYGGKVDGCIVEKNNSNKEILTDSNEDSGIENVLVKEVIISETNSLKDIQMIKEVIISEVTTSKPVIEVDTIGTELSDVVHNSETITHAEANNEEEVLVTLKQNEGDNLVEECIYYGNSIMIKPEKYRKKEKSIIGSTIGVVPDSTEENSRVGLLLSVKPHLDSTGTYHDLNSPLQKIDLLNVSNTNCVEEQTKGMEASISNSYGQPSNLSSLNLQPQGSSFQANGDPTCANTSTDANESTQLELKRKSFLSLSTSSIFSPLSPRRNLLRSTSTDLSFLSPLQTKSNQHSIPCSSGRDDFASSYGPPPNIPCTSLRTSKVSSLVHPSLRPLRTVSSLSQSSFEEYLDISPPSPTFHEKHQQHFNLDPPSLIPPWQLRLAKTKENEIYPCTLSFLPLSPSNKYAHHPPFPPPPPPPHVLCTQNNSRTQISEYEQGRVEGPCPSSSYGQSILNSHDVSLSLPQKDSSCIAITNGPSSSNYVEEVPMETILNQPTLSIPLEACKDELLHCKENGGIPIPPPPPPLCDHAKKYTRIPLPPPPPEGSHGILATTSTELIDAGPQLPPLSHLEWKRCPHHPPERPHYLPGEVGGAPSPPSPPPPQRENTSVGIQGGIPPLPPPLPPTLGDYGVAPPPPSIGAGAPPPPPPPGGITGVPPPPPIGGLGGHQAPPAPPLPEGIGGVPPPPPVGGLGGPPAPPPPAGFRGGTPPPNAHGGVAPPPPPPRGHGGVGGPPTPPGAPAPPMPPGVPGGPPPPPGGRGLPAPPGGRGVVGHGLTRSLGLNSAATARRSTLKPLHWVKVTRAMHGSLWAEIQKQADANSHSEFDVKELESLFAIAPKTKGGSKSDGASKSLGSKPDKVHLIDLRRANNTEIMLTKIKMPLPDMMSAALALDDSVLDADQLENLIKFCPTKEEMELLKNYTGDKETLGKCEQFFLELMKVPRVESKFRIFAFKIQFQSQIRDVRKNLLTVSSACEELRGSEKLKVIMEKILFLGNKLNQGTPRGQALGFRLDSLLKLTDTRANNSRMTLMHFLCKGLADKSPHLLDFYEEFVNLEAASKLQLKALAEEQQAVVKGLQKVEQELAASESDGPVSEVFRKTLKEFTDASGADVRSLSALYAEVGKSADALAYYFGEDPAKCPFEQVTSTLLNFVGLFRKAHEENIKQIEADKKKAQKEAEKEANQDRTPVKSKDGLVDRSPRSPFK.

The region spanning Arg5–Leu193 is the Phosphatase tensin-type domain. Cys126 (phosphocysteine intermediate) is an active-site residue. A C2 tensin-type domain is found at Pro199–Phe338. Disordered stretches follow at residues Gln688–Glu709, Asp1025–Leu1240, and Ile1631–Lys1669. The segment covering Leu1036–His1050 has biased composition (basic and acidic residues). 4 stretches are compositionally biased toward pro residues: residues Pro1060–Gln1069, Ala1098–Ile1127, Pro1136–Arg1190, and Pro1198–Pro1230. The region spanning Asn1247–Ala1646 is the FH2 domain.

The protein belongs to the formin-like family. Class-II subfamily.

This is Formin-like protein 12 (FH12) from Oryza sativa subsp. japonica (Rice).